We begin with the raw amino-acid sequence, 470 residues long: Fumarate hydratase class II (470 aa).

Residues 99–101, 129–132, 139–141, and Thr187 contribute to the substrate site; these read SGT, HPND, and SSN. The active-site Proton donor/acceptor is His188. Ser318 is an active-site residue. Substrate-binding positions include Ser319 and 324-326; that span reads KIN.

The protein belongs to the class-II fumarase/aspartase family. Fumarase subfamily. Homotetramer.

Its subcellular location is the cytoplasm. It catalyses the reaction (S)-malate = fumarate + H2O. It participates in carbohydrate metabolism; tricarboxylic acid cycle; (S)-malate from fumarate: step 1/1. Involved in the TCA cycle. Catalyzes the stereospecific interconversion of fumarate to L-malate. The polypeptide is Fumarate hydratase class II (Halobacterium salinarum (strain ATCC 700922 / JCM 11081 / NRC-1) (Halobacterium halobium)).